The sequence spans 252 residues: Phosphate import ATP-binding protein PstB 1 (252 aa).

The ABC transporter domain occupies 6-247; that stretch reads LQIRDLSVYY…PKRKETEDYI (242 aa). Position 38 to 45 (38 to 45) interacts with ATP; it reads GPSGSGKS.

The protein belongs to the ABC transporter superfamily. Phosphate importer (TC 3.A.1.7) family. In terms of assembly, the complex is composed of two ATP-binding proteins (PstB), two transmembrane proteins (PstC and PstA) and a solute-binding protein (PstS).

The protein resides in the cell membrane. It carries out the reaction phosphate(out) + ATP + H2O = ADP + 2 phosphate(in) + H(+). Its function is as follows. Part of the ABC transporter complex PstSACB involved in phosphate import. Responsible for energy coupling to the transport system. This is Phosphate import ATP-binding protein PstB 1 from Streptococcus pyogenes serotype M1.